The following is a 541-amino-acid chain: Formimidoyltransferase-cyclodeaminase (541 aa).

The formiminotransferase N-subdomain stretch occupies residues 1-181 (MSQLVECVPN…GATVAGARKF (181 aa)). Catalysis depends on histidine 82, which acts as the For formimidoyltransferase activity. Folate is bound at residue 163–172 (GPSAFVPSWG). Residues 182–326 (LLAFNINLLS…PKERIIEYLV (145 aa)) form a formiminotransferase C-subdomain region. Residues 327–334 (PEAGPEQS) are linker. The interval 335-541 (LLHKPLRTFV…VLDRLEARQA (207 aa)) is cyclodeaminase/cyclohydrolase. Aspartate 412 acts as the For cyclodeaminase activity in catalysis. Position 520 is a phosphoserine (serine 520).

In the C-terminal section; belongs to the cyclodeaminase/cyclohydrolase family. The protein in the N-terminal section; belongs to the formiminotransferase family. Homooctamer, including four polyglutamate binding sites. The subunits are arranged as a tetramer of dimers, and form a planar ring-shaped structure.

It localises to the cytoplasm. The protein resides in the cytosol. Its subcellular location is the golgi apparatus. It is found in the cytoskeleton. The protein localises to the microtubule organizing center. It localises to the centrosome. The protein resides in the centriole. It carries out the reaction 5-formimidoyltetrahydrofolate + L-glutamate = N-formimidoyl-L-glutamate + (6S)-5,6,7,8-tetrahydrofolate. It catalyses the reaction 5-formimidoyltetrahydrofolate + 2 H(+) = (6R)-5,10-methenyltetrahydrofolate + NH4(+). Its pathway is amino-acid degradation; L-histidine degradation into L-glutamate; L-glutamate from N-formimidoyl-L-glutamate (transferase route): step 1/1. Its function is as follows. Folate-dependent enzyme, that displays both transferase and deaminase activity. Serves to channel one-carbon units from formiminoglutamate to the folate pool. Binds and promotes bundling of vimentin filaments originating from the Golgi. The protein is Formimidoyltransferase-cyclodeaminase (FTCD) of Sus scrofa (Pig).